Here is a 207-residue protein sequence, read N- to C-terminus: Small ribosomal subunit protein uS4c (207 aa).

Positions 92–156 (MRLDNILFRL…YQSIITKRIE (65 aa)) constitute an S4 RNA-binding domain.

It belongs to the universal ribosomal protein uS4 family. As to quaternary structure, part of the 30S ribosomal subunit. Contacts protein S5. The interaction surface between S4 and S5 is involved in control of translational fidelity.

Its subcellular location is the plastid. The protein localises to the chloroplast. In terms of biological role, one of the primary rRNA binding proteins, it binds directly to 16S rRNA where it nucleates assembly of the body of the 30S subunit. With S5 and S12 plays an important role in translational accuracy. The protein is Small ribosomal subunit protein uS4c (rps4) of Equisetum pratense (Meadow horsetail).